Consider the following 23-residue polypeptide: Cysteine proteinase (23 aa).

The segment covering 1-10 has biased composition (basic and acidic residues); that stretch reads ADSLDWREKG. Positions 1–23 are disordered; sequence ADSLDWREKGVVNSIKDQAQXGS.

Belongs to the peptidase C1 family.

This chain is Cysteine proteinase, found in Tritrichomonas foetus (Trichomonas foetus).